The following is a 347-amino-acid chain: Chaperone protein DnaJ 1 (347 aa).

In terms of domain architecture, J spans 5-75; the sequence is DPHSLLGLSP…PAAAPHDAQA (71 aa). Low complexity predominate over residues 68–77; the sequence is AAPHDAQAAD. The interval 68–91 is disordered; that stretch reads AAPHDAQAADARPEPPPEAPPRGA. Residues 107-181 form a CR-type zinc finger; that stretch reads GGEKAFTIAD…CHGSGQARAA (75 aa). Residues Cys120, Cys123, Cys137, Cys140, Cys155, Cys158, Cys169, and Cys172 each contribute to the Zn(2+) site. CXXCXGXG motif repeat units lie at residues 120 to 127, 137 to 144, 155 to 162, and 169 to 176; these read CGACGGSG, CATCHGSG, CADCAGRG, and CGACHGSG.

This sequence belongs to the DnaJ family. As to quaternary structure, homodimer. It depends on Zn(2+) as a cofactor.

It is found in the cytoplasm. Functionally, participates actively in the response to hyperosmotic and heat shock by preventing the aggregation of stress-denatured proteins and by disaggregating proteins, also in an autonomous, DnaK-independent fashion. Unfolded proteins bind initially to DnaJ; upon interaction with the DnaJ-bound protein, DnaK hydrolyzes its bound ATP, resulting in the formation of a stable complex. GrpE releases ADP from DnaK; ATP binding to DnaK triggers the release of the substrate protein, thus completing the reaction cycle. Several rounds of ATP-dependent interactions between DnaJ, DnaK and GrpE are required for fully efficient folding. Also involved, together with DnaK and GrpE, in the DNA replication of plasmids through activation of initiation proteins. The polypeptide is Chaperone protein DnaJ 1 (Aromatoleum aromaticum (strain DSM 19018 / LMG 30748 / EbN1) (Azoarcus sp. (strain EbN1))).